The sequence spans 581 residues: Tetratricopeptide repeat and J domain-containing co-chaperone DNJ1 (581 aa).

Residues 1–19 (MKATLLPSLLALSLTLCLA) form the signal peptide. TPR repeat units follow at residues 48–81 (ASQH…DPSS), 82–115 (WLTY…NPKF), 116–149 (DKAY…RAEK), 221–254 (LETR…TPSP), 257–293 (LRRL…DPDN), 378–411 (LELH…DPDN), and 412–445 (VEAT…SGRT). N-linked (GlcNAc...) asparagine glycosylation occurs at asparagine 293. A J domain is found at 467–528 (DYYKVLGVKR…ELRKKYDQGD (62 aa)). The tract at residues 522–544 (KKYDQGDDPNDPMGGQQGGYGNP) is disordered.

As to quaternary structure, interacts with the ER chaperone BIP1.

Its subcellular location is the endoplasmic reticulum lumen. Its function is as follows. Endoplasmic reticulum (ER) protein that functions as a co-chaperone for BIP1 during ER stress. Might be specifically involved in the refolding of N-glycosylated proteins. The sequence is that of Tetratricopeptide repeat and J domain-containing co-chaperone DNJ1 from Mycosarcoma maydis (Corn smut fungus).